Reading from the N-terminus, the 165-residue chain is Phosphopantetheine adenylyltransferase (165 aa).

Serine 10 provides a ligand contact to substrate. ATP is bound by residues serine 10–phenylalanine 11 and histidine 18. Substrate-binding residues include lysine 42, threonine 79, and arginine 93. ATP contacts are provided by residues glycine 94–arginine 96, glutamate 104, and valine 129–threonine 135.

The protein belongs to the bacterial CoaD family. Homohexamer. Mg(2+) serves as cofactor.

Its subcellular location is the cytoplasm. It catalyses the reaction (R)-4'-phosphopantetheine + ATP + H(+) = 3'-dephospho-CoA + diphosphate. The protein operates within cofactor biosynthesis; coenzyme A biosynthesis; CoA from (R)-pantothenate: step 4/5. Reversibly transfers an adenylyl group from ATP to 4'-phosphopantetheine, yielding dephospho-CoA (dPCoA) and pyrophosphate. The chain is Phosphopantetheine adenylyltransferase from Nitrobacter winogradskyi (strain ATCC 25391 / DSM 10237 / CIP 104748 / NCIMB 11846 / Nb-255).